A 360-amino-acid polypeptide reads, in one-letter code: Phenylalanine--tRNA ligase alpha subunit (360 aa).

Glu260 lines the Mg(2+) pocket.

Belongs to the class-II aminoacyl-tRNA synthetase family. Phe-tRNA synthetase alpha subunit type 1 subfamily. Tetramer of two alpha and two beta subunits. It depends on Mg(2+) as a cofactor.

The protein resides in the cytoplasm. The enzyme catalyses tRNA(Phe) + L-phenylalanine + ATP = L-phenylalanyl-tRNA(Phe) + AMP + diphosphate + H(+). The protein is Phenylalanine--tRNA ligase alpha subunit of Methylocella silvestris (strain DSM 15510 / CIP 108128 / LMG 27833 / NCIMB 13906 / BL2).